We begin with the raw amino-acid sequence, 636 residues long: Epithelial sodium channel subunit alpha (636 aa).

The disordered stretch occupies residues 1 to 28 (MKSENQPEDKRIGKLKREANMQKMKEAA). Topologically, residues 1–77 (MKSENQPEDK…VCSKKNRMKT (77 aa)) are cytoplasmic. The chain crosses the membrane as a helical span at residues 78-98 (AFWSILFFFTFGLMYWQFGII). At 99 to 549 (YREYFSFPVN…SQWSLWFGSS (451 aa)) the chain is on the extracellular side. Cystine bridges form between C126/C293, C218/C225, C270/C277, C381/C466, C403/C443, C403/C462, C407/C458, C416/C443, C416/C466, and C418/C432. The chain crosses the membrane as a helical span at residues 550 to 570 (VLSVVELVELILDFIAITCIL). The Cytoplasmic segment spans residues 571 to 636 (AIHWLNMNRS…LRRVSSQQTE (66 aa)).

It belongs to the amiloride-sensitive sodium channel (TC 1.A.6) family. SCNN1A subfamily. Heterotrimer; containing an alpha/SCNN1A, a beta/SCNN1B and a gamma/SCNN1G subunit.

It localises to the apical cell membrane. It is found in the cell projection. The protein localises to the cilium. Its subcellular location is the cytoplasmic granule. The protein resides in the cytoplasm. It localises to the cytoplasmic vesicle. It is found in the secretory vesicle. The protein localises to the acrosome. Its subcellular location is the flagellum. The enzyme catalyses Na(+)(in) = Na(+)(out). Originally identified and characterized by its inhibition by the diuretic drug amiloride. Functionally, this is one of the three pore-forming subunits of the heterotrimeric epithelial sodium channel (ENaC), a critical regulator of sodium balance and fluid homeostasis. ENaC operates in epithelial tissues, where it mediates the electrodiffusion of sodium ions from extracellular fluid through the apical membrane of cells, with water following osmotically. The protein is Epithelial sodium channel subunit alpha of Anolis carolinensis (Green anole).